A 257-amino-acid chain; its full sequence is Uxu operon transcriptional regulator (257 aa).

Residues 8–76 (QRPYQEVGAM…RGAGIYVLDN (69 aa)) enclose the HTH gntR-type domain. The segment at residues 36-55 (EREIAEMLDVTRTVVREALI) is a DNA-binding region (H-T-H motif).

In terms of biological role, repressor for the uxuRBA operon. This chain is Uxu operon transcriptional regulator (uxuR), found in Escherichia coli (strain K12).